Reading from the N-terminus, the 96-residue chain is Large ribosomal subunit protein bL25 (96 aa).

Belongs to the bacterial ribosomal protein bL25 family. As to quaternary structure, part of the 50S ribosomal subunit; part of the 5S rRNA/L5/L18/L25 subcomplex. Contacts the 5S rRNA. Binds to the 5S rRNA independently of L5 and L18.

Its function is as follows. This is one of the proteins that binds to the 5S RNA in the ribosome where it forms part of the central protuberance. The sequence is that of Large ribosomal subunit protein bL25 from Francisella philomiragia subsp. philomiragia (strain ATCC 25017 / CCUG 19701 / FSC 153 / O#319-036).